The sequence spans 279 residues: Large ribosomal subunit protein uL2 (279 aa).

The tract at residues 223–279 (VVMNPVDHPHGGGEGRTSGGRHPVTPWGKPTKGKRTRSNKKTDSLIMRSRHLAKKKR) is disordered. Over residues 270-279 (RSRHLAKKKR) the composition is skewed to basic residues.

This sequence belongs to the universal ribosomal protein uL2 family. In terms of assembly, part of the 50S ribosomal subunit. Forms a bridge to the 30S subunit in the 70S ribosome.

Its function is as follows. One of the primary rRNA binding proteins. Required for association of the 30S and 50S subunits to form the 70S ribosome, for tRNA binding and peptide bond formation. It has been suggested to have peptidyltransferase activity; this is somewhat controversial. Makes several contacts with the 16S rRNA in the 70S ribosome. The protein is Large ribosomal subunit protein uL2 of Rhodospirillum rubrum (strain ATCC 11170 / ATH 1.1.1 / DSM 467 / LMG 4362 / NCIMB 8255 / S1).